The sequence spans 248 residues: MSFVVIIPARYASTRLPGKPLVDINGKPMIVHVLERARESGAARIIVATDHPDVARAIEAAGGEVCMTRADHQSGTERLAEVVEKCGFADDTVIVNVQGDEPMIPPAIIRQVAENLASAQAGMATLAVPVHDAQEAFNPNAVKVVMDAQGYALYFSRATIPWDRDRFAQSRDTIGDSFLRHIGIYGYRAGFIRRYVTWPASPLEQIEMLEQLRVLWHGEKIHVAVAAVVPGTGVDTPEDLERVRAEMR.

This sequence belongs to the KdsB family.

Its subcellular location is the cytoplasm. It carries out the reaction 3-deoxy-alpha-D-manno-oct-2-ulosonate + CTP = CMP-3-deoxy-beta-D-manno-octulosonate + diphosphate. The protein operates within nucleotide-sugar biosynthesis; CMP-3-deoxy-D-manno-octulosonate biosynthesis; CMP-3-deoxy-D-manno-octulosonate from 3-deoxy-D-manno-octulosonate and CTP: step 1/1. Its pathway is bacterial outer membrane biogenesis; lipopolysaccharide biosynthesis. In terms of biological role, activates KDO (a required 8-carbon sugar) for incorporation into bacterial lipopolysaccharide in Gram-negative bacteria. This chain is 3-deoxy-manno-octulosonate cytidylyltransferase, found in Cronobacter sakazakii (strain ATCC BAA-894) (Enterobacter sakazakii).